We begin with the raw amino-acid sequence, 183 residues long: Ribosome maturation factor RimM (183 aa).

Residues 102–183 (DDDFYWHQLE…CITVDWDPEF (82 aa)) form the PRC barrel domain.

The protein belongs to the RimM family. In terms of assembly, binds ribosomal protein uS19.

It is found in the cytoplasm. In terms of biological role, an accessory protein needed during the final step in the assembly of 30S ribosomal subunit, possibly for assembly of the head region. Essential for efficient processing of 16S rRNA. May be needed both before and after RbfA during the maturation of 16S rRNA. It has affinity for free ribosomal 30S subunits but not for 70S ribosomes. This chain is Ribosome maturation factor RimM, found in Saccharophagus degradans (strain 2-40 / ATCC 43961 / DSM 17024).